We begin with the raw amino-acid sequence, 473 residues long: MKTLYSLRRFYHVETLFNGTLALAGRDQETTGFAWWAGNARLINLSGKLLGAHVAHAGLIVFWAGAMNLFEVAHFVPEKPMYEQGLILLPHLATLGWGVGPGGEVIDTFPYFVSGVLHLISSAVLGFGGIYHALLGPETLEESFPFFGYVWKDRNKMTTILGIHLILLGVGAFLLVFKALYFGGVYDTWAPGGGDVRKITNLTLSPSVIFGYLLKSPFGGEGWIVSVDDLEDIIEGHVWLGSICIFGGIWHILTKPFAWARRALVWSGEAYLSYSLAALSVCGFIACCFVWFNNTAYPSEFYGPTGPEASQAQAFTFLVRDQRLGANVGSAQGPTGLGKYLMRSPTGEVIFGGETMRFWDLRAPWLEPLRGPNGLDLSRLKKDIQPWQERRSAEYMTHAPLGSLNSVGGVATEINAVNYVSPRSWLSTSHFVLGFFLFVGHLWHAGRARAAAAGFEKGIDRDFEPVLSMTPLN.

Residues 1–14 constitute a propeptide that is removed on maturation; sequence MKTLYSLRRFYHVE. Thr-15 is modified (N-acetylthreonine). Residue Thr-15 is modified to Phosphothreonine. The next 5 membrane-spanning stretches (helical) occupy residues 69-93, 134-155, 178-200, 255-275, and 291-312; these read LFEV…PHLA, LLGP…KDRN, KALY…RKIT, KPFA…LSYS, and WFNN…ASQA. Glu-367 is a [CaMn4O5] cluster binding site. The chain crosses the membrane as a helical span at residues 447–471; it reads RARAAAAGFEKGIDRDFEPVLSMTP.

It belongs to the PsbB/PsbC family. PsbC subfamily. As to quaternary structure, PSII is composed of 1 copy each of membrane proteins PsbA, PsbB, PsbC, PsbD, PsbE, PsbF, PsbH, PsbI, PsbJ, PsbK, PsbL, PsbM, PsbT, PsbX, PsbY, PsbZ, Psb30/Ycf12, at least 3 peripheral proteins of the oxygen-evolving complex and a large number of cofactors. It forms dimeric complexes. The cofactor is Binds multiple chlorophylls and provides some of the ligands for the Ca-4Mn-5O cluster of the oxygen-evolving complex. It may also provide a ligand for a Cl- that is required for oxygen evolution. PSII binds additional chlorophylls, carotenoids and specific lipids..

The protein resides in the plastid. Its subcellular location is the chloroplast thylakoid membrane. One of the components of the core complex of photosystem II (PSII). It binds chlorophyll and helps catalyze the primary light-induced photochemical processes of PSII. PSII is a light-driven water:plastoquinone oxidoreductase, using light energy to abstract electrons from H(2)O, generating O(2) and a proton gradient subsequently used for ATP formation. The protein is Photosystem II CP43 reaction center protein of Crucihimalaya wallichii (Rock-cress).